A 159-amino-acid chain; its full sequence is 3-dehydroquinate dehydratase (159 aa).

Residue Tyr31 is the Proton acceptor of the active site. Substrate-binding residues include Asn82, His88, and Asp95. His109 serves as the catalytic Proton donor. Substrate-binding positions include 110–111 and Arg120; that span reads IS.

This sequence belongs to the type-II 3-dehydroquinase family. As to quaternary structure, homododecamer.

The catalysed reaction is 3-dehydroquinate = 3-dehydroshikimate + H2O. It functions in the pathway metabolic intermediate biosynthesis; chorismate biosynthesis; chorismate from D-erythrose 4-phosphate and phosphoenolpyruvate: step 3/7. Its function is as follows. Catalyzes a trans-dehydration via an enolate intermediate. The polypeptide is 3-dehydroquinate dehydratase (Streptomyces avermitilis (strain ATCC 31267 / DSM 46492 / JCM 5070 / NBRC 14893 / NCIMB 12804 / NRRL 8165 / MA-4680)).